The primary structure comprises 246 residues: DNA-directed RNA polymerase subunit alpha (246 aa).

Belongs to the RNA polymerase alpha chain family. In plastids the minimal PEP RNA polymerase catalytic core is composed of four subunits: alpha, beta, beta', and beta''. When a (nuclear-encoded) sigma factor is associated with the core the holoenzyme is formed, which can initiate transcription (Potential).

The protein localises to the plastid. The enzyme catalyses RNA(n) + a ribonucleoside 5'-triphosphate = RNA(n+1) + diphosphate. In terms of biological role, DNA-dependent RNA polymerase catalyzes the transcription of DNA into RNA using the four ribonucleoside triphosphates as substrates. This is DNA-directed RNA polymerase subunit alpha (rpoA) from Helicosporidium sp. subsp. Simulium jonesii (Green alga).